We begin with the raw amino-acid sequence, 558 residues long: CTP synthase (558 aa).

An amidoligase domain region spans residues 1–271; that stretch reads MAARQQTKHL…DAYVVRRLGL (271 aa). CTP is bound at residue Ser-18. Ser-18 provides a ligand contact to UTP. Residues 19 to 24 and Asp-76 contribute to the ATP site; that span reads SLGKGL. Positions 76 and 145 each coordinate Mg(2+). Residues 152-154, 192-197, and Lys-228 each bind CTP; these read DIE and KTKPTQ. UTP-binding positions include 192–197 and Lys-228; that span reads KTKPTQ. The region spanning 296–545 is the Glutamine amidotransferase type-1 domain; it reads TIALVGKYVD…IRAALLHRCP (250 aa). Gly-359 contributes to the L-glutamine binding site. Residue Cys-386 is the Nucleophile; for glutamine hydrolysis of the active site. L-glutamine-binding positions include 387–390, Glu-410, and Arg-471; that span reads LGLQ. Catalysis depends on residues His-518 and Glu-520.

Belongs to the CTP synthase family. Homotetramer.

The catalysed reaction is UTP + L-glutamine + ATP + H2O = CTP + L-glutamate + ADP + phosphate + 2 H(+). The enzyme catalyses L-glutamine + H2O = L-glutamate + NH4(+). It carries out the reaction UTP + NH4(+) + ATP = CTP + ADP + phosphate + 2 H(+). The protein operates within pyrimidine metabolism; CTP biosynthesis via de novo pathway; CTP from UDP: step 2/2. Its activity is regulated as follows. Allosterically activated by GTP, when glutamine is the substrate; GTP has no effect on the reaction when ammonia is the substrate. The allosteric effector GTP functions by stabilizing the protein conformation that binds the tetrahedral intermediate(s) formed during glutamine hydrolysis. Inhibited by the product CTP, via allosteric rather than competitive inhibition. In terms of biological role, catalyzes the ATP-dependent amination of UTP to CTP with either L-glutamine or ammonia as the source of nitrogen. Regulates intracellular CTP levels through interactions with the four ribonucleotide triphosphates. This is CTP synthase from Acidothermus cellulolyticus (strain ATCC 43068 / DSM 8971 / 11B).